The primary structure comprises 348 residues: Putative transport protein HI_0338 (348 aa).

A run of 9 helical transmembrane segments spans residues leucine 7–alanine 27, alanine 28–isoleucine 48, leucine 60–isoleucine 80, valine 139–phenylalanine 159, valine 196–isoleucine 216, valine 223–glycine 243, isoleucine 245–phenylalanine 265, valine 267–methionine 287, and leucine 296–leucine 316.

Belongs to the autoinducer-2 exporter (AI-2E) (TC 2.A.86) family.

It localises to the cell membrane. In Haemophilus influenzae (strain ATCC 51907 / DSM 11121 / KW20 / Rd), this protein is Putative transport protein HI_0338.